Reading from the N-terminus, the 206-residue chain is 2-oxoglutarate-dependent dioxygenase iboH (206 aa).

In terms of domain architecture, Fe2OG dioxygenase spans 51 to 157; it reads PSTTTLVLLH…RYSIAYFLRP (107 aa). Residues H75, D77, and H134 each coordinate Fe cation. R148 is a 2-oxoglutarate binding site.

The protein belongs to the iron/ascorbate-dependent oxidoreductase family. Requires Fe(2+) as cofactor.

The catalysed reaction is L-glutamate + 2-oxoglutarate + O2 = (3R)-3-hydroxy-L-glutamate + succinate + CO2. It functions in the pathway secondary metabolite biosynthesis. Functionally, 2-oxoglutarate-dependent dioxygenase; part of the gene cluster that mediates the biosynthesis of the psychoactive metabolites ibotenic acid and muscimol. The first committed step is glutamate hydroxylation by the 2-oxoglutarate-dependent dioxygenase iboH, and the last step is decarboxylation of ibotenic acid to muscimol by the decarboxylase iboD. The order of the intermediate reactions is somewhat ambiguous. IboA likely activates the carboxylic acid at position 5 to introduce an amide bond, and the flavin monooxygenase iboF generates the N-O bond. There are several options for the latter step. One option is that iboF directly hydroxylates the amide nitrogen formed by iboA to produce a hydroxamic acid species. Another option is that iboF hydroxylates an external N-containing compound, whose resulting N-O bond is subsequently introduced into the hydroxyglutamate scaffold. The paralogous PLP-dependent cystathionine gamma-synthase-like enzymes iboG1 and iboG2 are likely involved in substitution of the OH group at position 3 by the O-N moiety. The first cyclic intermediate is most probably tricholomic acid which is likely desaturated to ibotenic acid by the cytochrome P450 monooxygenase iboC. The sequence is that of 2-oxoglutarate-dependent dioxygenase iboH from Amanita muscaria (strain Koide BX008).